The following is a 476-amino-acid chain: MSTNQLDTKSQAWSALFSEPMSELVKRYTASVFFDKRLWQADIAGSLAHAEMLAAQQIIGAQDLADIQRGMAQITQEIESGAFEWKLELEDVHLNIEARLTQLVGDAGKRLHTGRSRNDQVATDVRLWLRGEIDATAVLLADMQRALVHVASNNVDVILPGFTHLQVAQPVSFAHHLLAYVEMFARDAERLADLRKRVNRLPLGSAALAGTSYPLDRERVARTLGFDGVCQNSLDAVSDRDFAIEFTGFATLVMIHVSRMAEEIVLWMSQNFGFINLSDRYCTGSSIMPQKRNPDVAELARGKSGRVVGHLMGLITLMKGQPLAYNKDNQEDKEPLFDTVDTVKDTLRIMAEMIGGEVAADGSRSGGLTVKAEAMERAALRGYATATDLADYLVKKGLPFRDAHEVVAHAVKDAIALGKDLSELPLETLQGYNATITADVHAALTLAGSLNARNTLGGTAPSQVRAQIERHQARLG.

Belongs to the lyase 1 family. Argininosuccinate lyase subfamily.

It is found in the cytoplasm. The enzyme catalyses 2-(N(omega)-L-arginino)succinate = fumarate + L-arginine. It participates in amino-acid biosynthesis; L-arginine biosynthesis; L-arginine from L-ornithine and carbamoyl phosphate: step 3/3. The protein is Argininosuccinate lyase of Leptothrix cholodnii (strain ATCC 51168 / LMG 8142 / SP-6) (Leptothrix discophora (strain SP-6)).